We begin with the raw amino-acid sequence, 803 residues long: Phenylalanine--tRNA ligase beta subunit (803 aa).

One can recognise a tRNA-binding domain in the interval 39-152 (TPGFQKVVAG…PDASPGADAA (114 aa)). The region spanning 406–480 (RQPVTIELRP…RLYGYNRIPV (75 aa)) is the B5 domain. Residues Asp458, Asp464, Glu467, and Glu468 each contribute to the Mg(2+) site. Residues 709 to 802 (PRFPAVERDL…LEERLGASLR (94 aa)) enclose the FDX-ACB domain.

The protein belongs to the phenylalanyl-tRNA synthetase beta subunit family. Type 1 subfamily. In terms of assembly, tetramer of two alpha and two beta subunits. The cofactor is Mg(2+).

It is found in the cytoplasm. The enzyme catalyses tRNA(Phe) + L-phenylalanine + ATP = L-phenylalanyl-tRNA(Phe) + AMP + diphosphate + H(+). This chain is Phenylalanine--tRNA ligase beta subunit, found in Moorella thermoacetica (strain ATCC 39073 / JCM 9320).